The sequence spans 474 residues: MVVGDISTGTDVAVVGAGPGGYVAAIRAGQLGLDVTLVEKDAYGGTCLNYGCIPSKAMITASGVAHEAGHAEEMGVYADPDVDVAEMVDWKDGVVDQLTGGVEKLCKANGVNLIEGRAEFAGSDKLRVVHGGDGQGSETIEYEHAIVSTGSRPIEVPGFDFGDDPVLDSRQALAMAELPSSMVIVGGGYIGMELSTVFAKLGVDVTVVEMLDGILPQYGDDIARPVRQRAEELGIDFHFGLAADSWTDTDDGIVVTAADEDGEETEFETEKVLVAVGRQPVTDTLNLDAVGLEPNDDGRLETDHEARTDVENVFAIGDVAPGPMLAHKASKEGEVAAEVIAGEPAALDYQAVPAAVFTDPEIGTVGLTEDDAAAQGFDPVVGTFPFNASGRALTTGHDDGFVEVVADEESGFLLGAQIVGPEASELVAELGLAIEMGATLEDVASTIHTHPTLSEATMEAAEHALGHAVHTLNR.

Residues 39-47 (EKDAYGGTC), Lys56, and Ala118 each bind FAD. Residues Cys47 and Cys52 are joined by a disulfide bond. NAD(+) is bound by residues 186–190 (GGGYI), Glu209, and 275–278 (AVGR). FAD is bound by residues Asp318 and Ala326. Residue His450 is the Proton acceptor of the active site.

This sequence belongs to the class-I pyridine nucleotide-disulfide oxidoreductase family. As to quaternary structure, homodimer. FAD serves as cofactor.

The protein localises to the cytoplasm. The enzyme catalyses N(6)-[(R)-dihydrolipoyl]-L-lysyl-[protein] + NAD(+) = N(6)-[(R)-lipoyl]-L-lysyl-[protein] + NADH + H(+). The protein is Dihydrolipoyl dehydrogenase (lpdA) of Halobacterium salinarum (strain ATCC 700922 / JCM 11081 / NRC-1) (Halobacterium halobium).